Consider the following 426-residue polypeptide: Glutamyl-tRNA reductase (426 aa).

Substrate contacts are provided by residues 49 to 52, Ser109, 114 to 116, and Gln120; these read TCNR and EGQ. The Nucleophile role is filled by Cys50. 189–194 contributes to the NADP(+) binding site; that stretch reads GAGETG.

This sequence belongs to the glutamyl-tRNA reductase family. As to quaternary structure, homodimer.

It catalyses the reaction (S)-4-amino-5-oxopentanoate + tRNA(Glu) + NADP(+) = L-glutamyl-tRNA(Glu) + NADPH + H(+). It participates in porphyrin-containing compound metabolism; protoporphyrin-IX biosynthesis; 5-aminolevulinate from L-glutamyl-tRNA(Glu): step 1/2. The protein operates within porphyrin-containing compound metabolism; chlorophyll biosynthesis. Its function is as follows. Catalyzes the NADPH-dependent reduction of glutamyl-tRNA(Glu) to glutamate 1-semialdehyde (GSA). The polypeptide is Glutamyl-tRNA reductase (Chlorobium phaeobacteroides (strain BS1)).